Consider the following 534-residue polypeptide: Cysteine/serine-rich nuclear protein 2 (534 aa).

Residue methionine 1 is modified to N-acetylmethionine. Disordered stretches follow at residues 1–52 and 480–534; these read MDAF…FTPT and DCGL…PLAV. Residues 31-40 show a composition bias toward low complexity; sequence SSDSADSCDS. Positions 42–52 are enriched in polar residues; sequence NPPTTASFTPT. Basic and acidic residues predominate over residues 480–492; sequence DCGLKEPESEDLH.

It belongs to the AXUD1 family. Highest expression detected in thymus, brain and ovary. Low levels detected in naive T-cells.

The protein localises to the nucleus. Its function is as follows. Binds to the consensus sequence 5'-AGAGTG-3' and has transcriptional activator activity. May play a role in apoptosis. This is Cysteine/serine-rich nuclear protein 2 (Csrnp2) from Mus musculus (Mouse).